Consider the following 902-residue polypeptide: MASEASPSSSATRSEPPKDSPAEERGPASKEVSEVIESLKKKLAADRCISIKKRIDENKKNLFAITQSFMRSSMERGGSCKDGSDLLVKRQRDSPGMKSGIDESNNNRYVEDGPASSGMVQGSSVPVKISLRPIKMPDIKRLSPYTTWVFLDRNQRMTEDQSVVGRRRIYYDQTGGEALICSDSEEEAIDDEEEKRDFLEPEDYIIRMTLEQLGLSDSVLAELASFLSRSTSEIKARHGVLMKEKEVSESGDNQAESSLLNKDMEGALDSFDNLFCRRCLVFDCRLHGCSQDLIFPAEKPAPWCPPVDENLTCGANCYKTLLKSGRFPGYGTIEGKTGTSSDGAGTKTTPTKFSSKLNGRKPKTFPSESASSNEKCALETSDSENGLQQDTNSDKVSSSPKVKGSGRRVGRKRNKNRVAERVPRKTQKRQKKTEASDSDSIASGSCSPSDAKHKDNEDATSSSQKHVKSGNSGKSRKNGTPAEVSNNSVKDDVPVCQSNEVASELDAPGSDESLRKEEFMGETVSRGRLATNKLWRPLEKSLFDKGVEIFGMNSCLIARNLLSGFKSCWEVFQYMTCSENKASFFGGDGLNPDGSSKFDINGNMVNNQVRRRSRFLRRRGKVRRLKYTWKSAAYHSIRKRITEKKDQPCRQFNPCNCKIACGKECPCLLNGTCCEKYCGCPKSCKNRFRGCHCAKSQCRSRQCPCFAADRECDPDVCRNCWVIGGDGSLGVPSQRGDNYECRNMKLLLKQQQRVLLGISDVSGWGAFLKNSVSKHEYLGEYTGELISHKEADKRGKIYDRENCSFLFNLNDQFVLDAYRKGDKLKFANHSPEPNCYAKVIMVAGDHRVGIFAKERILAGEELFYDYRYEPDRAPAWAKKPEAPGSKKDENVTPSVGRPKKLA.

The segment covering 1–14 (MASEASPSSSATRS) has biased composition (low complexity). 3 disordered regions span residues 1-33 (MASEASPSSSATRSEPPKDSPAEERGPASKEVS), 73-107 (SMERGGSCKDGSDLLVKRQRDSPGMKSGIDESNNN), and 335-522 (GKTG…FMGE). Basic and acidic residues-rich tracts occupy residues 15 to 33 (EPPKDSPAEERGPASKEVS) and 78 to 95 (GSCKDGSDLLVKRQRDSP). Residues 337 to 357 (TGTSSDGAGTKTTPTKFSSKL) show a composition bias toward polar residues. The span at 394–403 (DKVSSSPKVK) shows a compositional bias: low complexity. Residues 404–416 (GSGRRVGRKRNKN) show a composition bias toward basic residues. Positions 438 to 449 (SDSIASGSCSPS) are enriched in low complexity. Residues 459-473 (ATSSSQKHVKSGNSG) are compositionally biased toward polar residues. The 51-residue stretch at 531-581 (TNKLWRPLEKSLFDKGVEIFGMNSCLIARNLLSGFKSCWEVFQYMTCSENK) folds into the SANT domain. The CXC domain maps to 638-737 (RKRITEKKDQ…SLGVPSQRGD (100 aa)). The 116-residue stretch at 752–867 (QRVLLGISDV…AGEELFYDYR (116 aa)) folds into the SET domain. Tyr-866 is a binding site for S-adenosyl-L-methionine. Over residues 875-890 (AWAKKPEAPGSKKDEN) the composition is skewed to basic and acidic residues. The tract at residues 875–902 (AWAKKPEAPGSKKDENVTPSVGRPKKLA) is disordered.

This sequence belongs to the class V-like SAM-binding methyltransferase superfamily. Histone-lysine methyltransferase family. EZ subfamily. As to quaternary structure, probable component of a PcG complex. In plants, PcG complexes are probably composed of a member of the EZ family (CLF or MEA), FIE, and a member of the VEFS family (FIS2, VRN2 or EMF2). Interacts with FIE. Interacts with RING1A. Binds to ALP1. Interacts with BLI. Binds to ATX1 in the nucleus. Interacts with EOL1. Interacts (via SANT domain) with HXK1 in the nucleus. In terms of tissue distribution, strongly expressed throughout the apical meristem, leaf primordia, and leaves of 7-8 day-old seedling. Weakly expressed in the vasculature of hypocotyl. Strongly expressed throughout the young stages 1 and 2 floral meristems that arose on the flanks of the apex. In stage 3 and 4 flowers, it is expressed in the emerging sepal primordia and in the dome of the floral meristem. During stages 6 and 7, it is strongly expressed in developing petal and stamen, and weakly expressed in the sepals. Late in floral development, at stage 12, it is weakly expressed in all floral whorls, and expressed at intermediate level in petals and ovules.

The protein localises to the nucleus. The catalysed reaction is L-lysyl-[histone] + S-adenosyl-L-methionine = N(6)-methyl-L-lysyl-[histone] + S-adenosyl-L-homocysteine + H(+). In terms of biological role, polycomb group (PcG) protein. Catalytic subunit of some PcG multiprotein complex, which methylates 'Lys-27' of histone H3, leading to transcriptional repression of the affected target genes, mainly abscisic acid (ABA) responsive elements. Required to regulate floral development by repressing the AGAMOUS homeotic gene in leaves, inflorescence stems and flowers. Together with ATX1, modulates AG nucleosome methylation statement. Regulates the antero-posterior organization of the endosperm, as well as the division and elongation rates of leaf cells. PcG proteins act by forming multiprotein complexes, which are required to maintain the transcriptionally repressive state of homeotic genes throughout development. PcG proteins are not required to initiate repression, but to maintain it during later stages of development. Forms a nuclear complex with EZA1/SWN and HXK1 to target common glucose-responsive genes and regulate glucose signaling by glucose-mediated gene repression. Affects the recruitment of HXK1 to the target chromatin. This chain is Histone-lysine N-methyltransferase CLF, found in Arabidopsis thaliana (Mouse-ear cress).